The primary structure comprises 100 residues: MVPLWWYIVLGVVLFVIGAAGVLIRRNILVVLMSLELLLNSVNINFIAFGHYYDDFRGQIFAIFVIAITAAEVAVALGILVALVRNKSTLKVDDVTMMKG.

The next 3 membrane-spanning stretches (helical) occupy residues 4–24 (LWWY…GVLI), 28–48 (ILVV…NFIA), and 60–80 (IFAI…LGIL).

This sequence belongs to the complex I subunit 4L family. NDH-1 is composed of 14 different subunits. Subunits NuoA, H, J, K, L, M, N constitute the membrane sector of the complex.

It is found in the cell inner membrane. It catalyses the reaction a quinone + NADH + 5 H(+)(in) = a quinol + NAD(+) + 4 H(+)(out). Functionally, NDH-1 shuttles electrons from NADH, via FMN and iron-sulfur (Fe-S) centers, to quinones in the respiratory chain. The immediate electron acceptor for the enzyme in this species is believed to be ubiquinone. Couples the redox reaction to proton translocation (for every two electrons transferred, four hydrogen ions are translocated across the cytoplasmic membrane), and thus conserves the redox energy in a proton gradient. The protein is NADH-quinone oxidoreductase subunit K 2 of Rhizobium etli (strain ATCC 51251 / DSM 11541 / JCM 21823 / NBRC 15573 / CFN 42).